We begin with the raw amino-acid sequence, 250 residues long: MRRKIVVGNWKMNKTVAESTALATAVIAALGDGCSACEAGIAPTYPALDAVGRALEGSGIALVAQNCHYEDDGAYTGEVSTGMLKAVGCSYVIIGHSERRQYFGETDETVNLRIKKVLASGMKVILCVGETLAEREEGVTGTVVSRQVTEGLKGVADITDLVIAYEPVWAIGTGKTASSDQAQEVHRLIRDTVKGMYGAEVSEAVRIQYGGSVKASNAEELFAMPDIDGGLIGGASLNAADFAAIVKAGC.

9-11 (NWK) lines the substrate pocket. H96 serves as the catalytic Electrophile. The active-site Proton acceptor is E166. Substrate-binding positions include G172, S212, and 233 to 234 (GG).

Belongs to the triosephosphate isomerase family. Homodimer.

Its subcellular location is the cytoplasm. The catalysed reaction is D-glyceraldehyde 3-phosphate = dihydroxyacetone phosphate. The protein operates within carbohydrate biosynthesis; gluconeogenesis. Its pathway is carbohydrate degradation; glycolysis; D-glyceraldehyde 3-phosphate from glycerone phosphate: step 1/1. Functionally, involved in the gluconeogenesis. Catalyzes stereospecifically the conversion of dihydroxyacetone phosphate (DHAP) to D-glyceraldehyde-3-phosphate (G3P). This Chlorobium luteolum (strain DSM 273 / BCRC 81028 / 2530) (Pelodictyon luteolum) protein is Triosephosphate isomerase.